The following is a 367-amino-acid chain: Inositol-3-phosphate synthase (367 aa).

Ser-2 carries the N-acetylserine modification. Lys-73 participates in a covalent cross-link: Isoglutamyl lysine isopeptide (Lys-Gln) (interchain with Q-Cter in protein Pup). Residues Asp-78, Ala-137, Tyr-157, Ser-200, Asp-235, and Lys-248 each contribute to the NAD(+) site.

The protein belongs to the myo-inositol 1-phosphate synthase family. It depends on NAD(+) as a cofactor. Pupylated at Lys-73 by the prokaryotic ubiquitin-like protein Pup, which leads to its degradation by the proteasome.

The catalysed reaction is D-glucose 6-phosphate = 1D-myo-inositol 3-phosphate. In terms of biological role, key enzyme in myo-inositol biosynthesis pathway that catalyzes the conversion of glucose 6-phosphate to 1D-myo-inositol 3-phosphate in a NAD-dependent manner. The sequence is that of Inositol-3-phosphate synthase (ino1) from Mycobacterium tuberculosis (strain ATCC 25618 / H37Rv).